Reading from the N-terminus, the 385-residue chain is Putative UDP-N-acetylglucosamine 2-epimerase (385 aa).

Belongs to the UDP-N-acetylglucosamine 2-epimerase family.

The protein localises to the cytoplasm. It catalyses the reaction UDP-N-acetyl-alpha-D-glucosamine = UDP-N-acetyl-alpha-D-mannosamine. The sequence is that of Putative UDP-N-acetylglucosamine 2-epimerase from Clostridium acetobutylicum (strain ATCC 824 / DSM 792 / JCM 1419 / IAM 19013 / LMG 5710 / NBRC 13948 / NRRL B-527 / VKM B-1787 / 2291 / W).